The chain runs to 444 residues: Trigger factor (444 aa).

Residues 163–248 (GDIAVIDSPV…VKELRKNVPA (86 aa)) form the PPIase FKBP-type domain.

This sequence belongs to the FKBP-type PPIase family. Tig subfamily.

It is found in the cytoplasm. The enzyme catalyses [protein]-peptidylproline (omega=180) = [protein]-peptidylproline (omega=0). Functionally, involved in protein export. Acts as a chaperone by maintaining the newly synthesized protein in an open conformation. Functions as a peptidyl-prolyl cis-trans isomerase. The chain is Trigger factor (tig) from Azospirillum brasilense.